The following is a 345-amino-acid chain: Phenylalanine--tRNA ligase alpha subunit (345 aa).

Glutamate 266 serves as a coordination point for Mg(2+).

This sequence belongs to the class-II aminoacyl-tRNA synthetase family. Phe-tRNA synthetase alpha subunit type 1 subfamily. Tetramer of two alpha and two beta subunits. It depends on Mg(2+) as a cofactor.

Its subcellular location is the cytoplasm. The enzyme catalyses tRNA(Phe) + L-phenylalanine + ATP = L-phenylalanyl-tRNA(Phe) + AMP + diphosphate + H(+). This chain is Phenylalanine--tRNA ligase alpha subunit, found in Methylibium petroleiphilum (strain ATCC BAA-1232 / LMG 22953 / PM1).